The following is a 126-amino-acid chain: Large ribosomal subunit protein mL52 (126 aa).

The transit peptide at Met1 to Ala28 directs the protein to the mitochondrion.

It belongs to the mitochondrion-specific ribosomal protein mL52 family. As to quaternary structure, component of the mitochondrial ribosome large subunit (39S) which comprises a 16S rRNA and about 50 distinct proteins.

It localises to the mitochondrion. This chain is Large ribosomal subunit protein mL52 (mRpL52), found in Drosophila melanogaster (Fruit fly).